The primary structure comprises 493 residues: Guanosine-5'-triphosphate,3'-diphosphate pyrophosphatase (493 aa).

This sequence belongs to the GppA/Ppx family. GppA subfamily.

It catalyses the reaction guanosine 3'-diphosphate 5'-triphosphate + H2O = guanosine 3',5'-bis(diphosphate) + phosphate + H(+). It participates in purine metabolism; ppGpp biosynthesis; ppGpp from GTP: step 2/2. Catalyzes the conversion of pppGpp to ppGpp. Guanosine pentaphosphate (pppGpp) is a cytoplasmic signaling molecule which together with ppGpp controls the 'stringent response', an adaptive process that allows bacteria to respond to amino acid starvation, resulting in the coordinated regulation of numerous cellular activities. The polypeptide is Guanosine-5'-triphosphate,3'-diphosphate pyrophosphatase (Salmonella dublin (strain CT_02021853)).